Here is a 500-residue protein sequence, read N- to C-terminus: Glycogen synthase (500 aa).

Lysine 15 contacts ADP-alpha-D-glucose.

It belongs to the glycosyltransferase 1 family. Bacterial/plant glycogen synthase subfamily.

The enzyme catalyses [(1-&gt;4)-alpha-D-glucosyl](n) + ADP-alpha-D-glucose = [(1-&gt;4)-alpha-D-glucosyl](n+1) + ADP + H(+). It participates in glycan biosynthesis; glycogen biosynthesis. In terms of biological role, synthesizes alpha-1,4-glucan chains using ADP-glucose. This chain is Glycogen synthase, found in Protochlamydia amoebophila (strain UWE25).